The chain runs to 330 residues: Methionyl-tRNA formyltransferase (330 aa).

Residue 121–124 (SLLP) coordinates (6S)-5,6,7,8-tetrahydrofolate.

This sequence belongs to the Fmt family.

The enzyme catalyses L-methionyl-tRNA(fMet) + (6R)-10-formyltetrahydrofolate = N-formyl-L-methionyl-tRNA(fMet) + (6S)-5,6,7,8-tetrahydrofolate + H(+). In terms of biological role, attaches a formyl group to the free amino group of methionyl-tRNA(fMet). The formyl group appears to play a dual role in the initiator identity of N-formylmethionyl-tRNA by promoting its recognition by IF2 and preventing the misappropriation of this tRNA by the elongation apparatus. This Burkholderia orbicola (strain MC0-3) protein is Methionyl-tRNA formyltransferase.